The following is a 146-amino-acid chain: Flagellar assembly factor FliW 1 (146 aa).

It belongs to the FliW family. As to quaternary structure, interacts with translational regulator CsrA and flagellin(s).

Its subcellular location is the cytoplasm. In terms of biological role, acts as an anti-CsrA protein, binds CsrA and prevents it from repressing translation of its target genes, one of which is flagellin. Binds to flagellin and participates in the assembly of the flagellum. The polypeptide is Flagellar assembly factor FliW 1 (Helicobacter hepaticus (strain ATCC 51449 / 3B1)).